A 578-amino-acid chain; its full sequence is Interleukin-10 receptor subunit alpha (578 aa).

The N-terminal stretch at 1-21 (MLPCLVVLLAALLSLRLGSDA) is a signal peptide. The Extracellular portion of the chain corresponds to 22 to 235 (HGTELPSPPS…LTRQYFTVTN (214 aa)). Residues Asn-50, Asn-74, Asn-110, Asn-154, Asn-177, and Asn-189 are each glycosylated (N-linked (GlcNAc...) asparagine). Residues Cys-56 and Cys-75 are joined by a disulfide bond. An intrachain disulfide couples Cys-202 to Cys-223. Residues 236 to 256 (VIIFFAFVLLLSGALAYCLAL) traverse the membrane as a helical segment. At 257–578 (QLYVRRRKKL…PLISSLQSSE (322 aa)) the chain is on the cytoplasmic side. Positions 313–436 (LHGSTDSGFG…PPEPEVPGEE (124 aa)) are disordered. The segment covering 316–332 (STDSGFGSTKPSLQTEE) has biased composition (polar residues). A BTRC recognition motif motif is present at residues 318–323 (DSGFGS). The segment covering 357–371 (GDSCSSGSSNSTDSG) has biased composition (low complexity). Residues 377–396 (PSLSPSTGPTWEQQVGSNSR) show a composition bias toward polar residues.

The protein belongs to the type II cytokine receptor family. Interacts with IL10. Interacts with IL10RB. Interacts (via its cytoplasmic domain) with JAK1 (via N-terminus). Interacts with BTRC; this interaction leads to IL10RA ubiquitination and subsequent degradation. Interacts with STAT3. In terms of assembly, (Microbial infection) Interacts with human cytomegalovirus protein IL10. As to quaternary structure, (Microbial infection) Interacts with Epstein-Barr virus protein IL10. In terms of processing, phosphorylated. Phosphorylation of the cytoplasmic tail induced STAT3 activation. Post-translationally, ubiquitinated by BTRC; ubiquitination leads to endocytosis and subsequent degradation of IL10RA. Primarily expressed in hematopoetic cells including B-cells, T-cells, NK cells, monocytes and macrophages. Not expressed in non-hematopoetic cells such as fibroblasts or endothelial cells.

Its subcellular location is the cell membrane. The protein localises to the cytoplasm. In terms of biological role, cell surface receptor for the cytokine IL10 that participates in IL10-mediated anti-inflammatory functions, limiting excessive tissue disruption caused by inflammation. Upon binding to IL10, induces a conformational change in IL10RB, allowing IL10RB to bind IL10 as well. In turn, the heterotetrameric assembly complex, composed of two subunits of IL10RA and IL10RB, activates the kinases JAK1 and TYK2 that are constitutively associated with IL10RA and IL10RB respectively. These kinases then phosphorylate specific tyrosine residues in the intracellular domain in IL10RA leading to the recruitment and subsequent phosphorylation of STAT3. Once phosphorylated, STAT3 homodimerizes, translocates to the nucleus and activates the expression of anti-inflammatory genes. In addition, IL10RA-mediated activation of STAT3 inhibits starvation-induced autophagy. The polypeptide is Interleukin-10 receptor subunit alpha (IL10RA) (Homo sapiens (Human)).